The primary structure comprises 357 residues: Putative F-box protein At5g50220 (357 aa).

In terms of domain architecture, F-box spans 27–73; sequence IAEDIGIPIDLMVEILKKLPAKSLIKFQCVSKQWSSIIGSSRDFIDS.

This Arabidopsis thaliana (Mouse-ear cress) protein is Putative F-box protein At5g50220.